A 507-amino-acid polypeptide reads, in one-letter code: ATP synthase subunit alpha (507 aa).

168 to 175 (GDRQTGKT) contacts ATP.

This sequence belongs to the ATPase alpha/beta chains family. As to quaternary structure, F-type ATPases have 2 components, CF(1) - the catalytic core - and CF(0) - the membrane proton channel. CF(1) has five subunits: alpha(3), beta(3), gamma(1), delta(1), epsilon(1). CF(0) has three main subunits: a(1), b(2) and c(9-12). The alpha and beta chains form an alternating ring which encloses part of the gamma chain. CF(1) is attached to CF(0) by a central stalk formed by the gamma and epsilon chains, while a peripheral stalk is formed by the delta and b chains.

It localises to the cell membrane. It catalyses the reaction ATP + H2O + 4 H(+)(in) = ADP + phosphate + 5 H(+)(out). In terms of biological role, produces ATP from ADP in the presence of a proton gradient across the membrane. The alpha chain is a regulatory subunit. The sequence is that of ATP synthase subunit alpha from Mesomycoplasma hyopneumoniae (strain 232) (Mycoplasma hyopneumoniae).